Consider the following 376-residue polypeptide: Succinyl-diaminopimelate desuccinylase (376 aa).

Zn(2+) is bound at residue His64. Asp66 is a catalytic residue. Residue Asp97 participates in Zn(2+) binding. Glu131 (proton acceptor) is an active-site residue. Zn(2+) contacts are provided by Glu132, Glu160, and His347.

The protein belongs to the peptidase M20A family. DapE subfamily. As to quaternary structure, homodimer. Zn(2+) serves as cofactor. It depends on Co(2+) as a cofactor.

The enzyme catalyses N-succinyl-(2S,6S)-2,6-diaminopimelate + H2O = (2S,6S)-2,6-diaminopimelate + succinate. It participates in amino-acid biosynthesis; L-lysine biosynthesis via DAP pathway; LL-2,6-diaminopimelate from (S)-tetrahydrodipicolinate (succinylase route): step 3/3. Its function is as follows. Catalyzes the hydrolysis of N-succinyl-L,L-diaminopimelic acid (SDAP), forming succinate and LL-2,6-diaminopimelate (DAP), an intermediate involved in the bacterial biosynthesis of lysine and meso-diaminopimelic acid, an essential component of bacterial cell walls. This is Succinyl-diaminopimelate desuccinylase from Wigglesworthia glossinidia brevipalpis.